A 401-amino-acid chain; its full sequence is L-rhamnonate dehydratase (401 aa).

The substrate site is built by histidine 29 and arginine 55. Residues aspartate 222, glutamate 248, and glutamate 276 each contribute to the Mg(2+) site. The active-site Proton acceptor is histidine 325. Position 345 (glutamate 345) interacts with substrate.

The protein belongs to the mandelate racemase/muconate lactonizing enzyme family. RhamD subfamily. As to quaternary structure, homooctamer; tetramer of dimers. Requires Mg(2+) as cofactor.

The catalysed reaction is L-rhamnonate = 2-dehydro-3-deoxy-L-rhamnonate + H2O. Functionally, catalyzes the dehydration of L-rhamnonate to 2-keto-3-deoxy-L-rhamnonate (KDR). The sequence is that of L-rhamnonate dehydratase from Escherichia coli O157:H7.